Consider the following 447-residue polypeptide: N-succinylarginine dihydrolase (447 aa).

Substrate-binding positions include 19 to 28 (AGLSFGNEAS), Asn110, and 137 to 138 (HR). Glu174 is a catalytic residue. Residue Arg212 coordinates substrate. His248 is a catalytic residue. The substrate site is built by Asp250 and Asn359. The active-site Nucleophile is the Cys365.

It belongs to the succinylarginine dihydrolase family. As to quaternary structure, homodimer.

It catalyses the reaction N(2)-succinyl-L-arginine + 2 H2O + 2 H(+) = N(2)-succinyl-L-ornithine + 2 NH4(+) + CO2. It participates in amino-acid degradation; L-arginine degradation via AST pathway; L-glutamate and succinate from L-arginine: step 2/5. In terms of biological role, catalyzes the hydrolysis of N(2)-succinylarginine into N(2)-succinylornithine, ammonia and CO(2). The polypeptide is N-succinylarginine dihydrolase (Escherichia coli O6:K15:H31 (strain 536 / UPEC)).